The chain runs to 145 residues: D-aminoacyl-tRNA deacylase (145 aa).

A Gly-cisPro motif, important for rejection of L-amino acids motif is present at residues 137-138 (GP).

This sequence belongs to the DTD family. As to quaternary structure, homodimer.

It localises to the cytoplasm. It catalyses the reaction glycyl-tRNA(Ala) + H2O = tRNA(Ala) + glycine + H(+). The catalysed reaction is a D-aminoacyl-tRNA + H2O = a tRNA + a D-alpha-amino acid + H(+). In terms of biological role, an aminoacyl-tRNA editing enzyme that deacylates mischarged D-aminoacyl-tRNAs. Also deacylates mischarged glycyl-tRNA(Ala), protecting cells against glycine mischarging by AlaRS. Acts via tRNA-based rather than protein-based catalysis; rejects L-amino acids rather than detecting D-amino acids in the active site. By recycling D-aminoacyl-tRNA to D-amino acids and free tRNA molecules, this enzyme counteracts the toxicity associated with the formation of D-aminoacyl-tRNA entities in vivo and helps enforce protein L-homochirality. The sequence is that of D-aminoacyl-tRNA deacylase from Shewanella baltica (strain OS223).